We begin with the raw amino-acid sequence, 508 residues long: Light-independent protochlorophyllide reductase subunit B (508 aa).

D36 is a binding site for [4Fe-4S] cluster. Residue D294 is the Proton donor of the active site. A substrate-binding site is contributed by 429–430 (GM).

Belongs to the ChlB/BchB/BchZ family. As to quaternary structure, protochlorophyllide reductase is composed of three subunits; ChlL, ChlN and ChlB. Forms a heterotetramer of two ChlB and two ChlN subunits. The cofactor is [4Fe-4S] cluster.

The enzyme catalyses chlorophyllide a + oxidized 2[4Fe-4S]-[ferredoxin] + 2 ADP + 2 phosphate = protochlorophyllide a + reduced 2[4Fe-4S]-[ferredoxin] + 2 ATP + 2 H2O. The protein operates within porphyrin-containing compound metabolism; chlorophyll biosynthesis (light-independent). Its function is as follows. Component of the dark-operative protochlorophyllide reductase (DPOR) that uses Mg-ATP and reduced ferredoxin to reduce ring D of protochlorophyllide (Pchlide) to form chlorophyllide a (Chlide). This reaction is light-independent. The NB-protein (ChlN-ChlB) is the catalytic component of the complex. The polypeptide is Light-independent protochlorophyllide reductase subunit B (Picosynechococcus sp. (strain ATCC 27264 / PCC 7002 / PR-6) (Agmenellum quadruplicatum)).